A 166-amino-acid polypeptide reads, in one-letter code: Phospholipase A2 inhibitor (166 aa).

A signal peptide spans 1-19 (MRLILLSGLLLLGIFLANG). One can recognise a C-type lectin domain in the interval 46–161 (LKGSFLIVHK…CDDNLLVVCE (116 aa)). Intrachain disulfides connect C83–C160 and C138–C152. N122 carries N-linked (GlcNAc...) asparagine glycosylation.

Belongs to the alpha-type phospholipase A2 inhibitor family. As to quaternary structure, homotrimer; non-covalently linked. In terms of tissue distribution, expressed by the liver.

It is found in the secreted. Functionally, this phospholipase A2 inhibitor binds directly phospholipase A2 in the presence or absence of calcium. This Bothrops jararacussu (Jararacussu) protein is Phospholipase A2 inhibitor.